The following is a 497-amino-acid chain: Probable cytosol aminopeptidase (497 aa).

Mn(2+) contacts are provided by K268 and D273. K280 is an active-site residue. Mn(2+) contacts are provided by D291, D350, and E352. Residue R354 is part of the active site.

It belongs to the peptidase M17 family. The cofactor is Mn(2+).

Its subcellular location is the cytoplasm. It carries out the reaction Release of an N-terminal amino acid, Xaa-|-Yaa-, in which Xaa is preferably Leu, but may be other amino acids including Pro although not Arg or Lys, and Yaa may be Pro. Amino acid amides and methyl esters are also readily hydrolyzed, but rates on arylamides are exceedingly low.. The enzyme catalyses Release of an N-terminal amino acid, preferentially leucine, but not glutamic or aspartic acids.. Presumably involved in the processing and regular turnover of intracellular proteins. Catalyzes the removal of unsubstituted N-terminal amino acids from various peptides. This Alkalilimnicola ehrlichii (strain ATCC BAA-1101 / DSM 17681 / MLHE-1) protein is Probable cytosol aminopeptidase.